The chain runs to 631 residues: MNRNTPKARGASSLAMAVAMGLAVLTTAPATANDQLVELAKDPANWVMTGRDYNAQNYSEMTDINKENVKQLRPAWSFSTGVLHGHEGTPLVVGDRMFIHTPFPNTTFALDLNEPGKILWQNKPKQNPTARTVACCDVVNRGLAYWPGDDQVKPLIFRTQLDGHIVAMDAETGETRWIMENSDIKVGSTLTIAPYVIKDLVLVGSSGAELGVRGYVTAYDVKSGEMRWRAFATGPDEELLLAEDFNAPNPHYGQKNLGLETWEGDAWKIGGGTNWGWYAYDPEVDLFYYGSGNPAPWNETMRPGDNKWTMAIWGREATTGEAKFAYQKTPHDEWDYAGVNVMMLSEQEDKQGQMRKLLTHPDRNGIVYTLDRTNGDLISADKMDDTVNWVKEVQLDTGLPVRDPEFGTRMDHKARDICPSAMGYHNQGHDSYDPERKVFMLGINHICMDWEPFMLPYRAGQFFVGATLTMYPGPKATAERAGAGQIKAYDAISGEMKWEKMERFSVWGGTMATAGGLTFYVTLDGFIKARDSDTGDLLWKFKLPSGVIGHPMTYKHDGRQYVAIMYGVGGWPGVGLVFDLADPTAGLGSVGAFKRLQEFTQMGGGVMVFSLDGESPYSDPNVGEYAPGEPT.

Residues 1-32 form the signal peptide; it reads MNRNTPKARGASSLAMAVAMGLAVLTTAPATA. A disulfide bond links cysteine 135 and cysteine 136. The Ca(2+) site is built by glutamate 209 and asparagine 293. Aspartate 335 acts as the Proton acceptor in catalysis. Cysteine 418 and cysteine 447 are joined by a disulfide.

Belongs to the bacterial PQQ dehydrogenase family. As to quaternary structure, heterotetramer composed of 2 alpha and 2 beta subunits. It depends on pyrroloquinoline quinone as a cofactor. Requires Ca(2+) as cofactor.

It localises to the periplasm. It carries out the reaction 2 Fe(III)-[cytochrome cL] + a primary alcohol = 2 Fe(II)-[cytochrome cL] + an aldehyde + 2 H(+). Its function is as follows. Catalyzes the oxidation of primary alcohols including methanol. This Paracoccus denitrificans protein is Methanol dehydrogenase [cytochrome c] subunit 1 (moxF).